The sequence spans 748 residues: Transducin-like enhancer protein 4 (748 aa).

Disordered stretches follow at residues 1–20 (MIRDLSKMYRRRAHPAPHQP) and 157–332 (LPIK…DPLA). Positions 1-112 (MIRDLSKMYR…SQEQQQLQAQ (112 aa)) are q domain. Positions 113–179 (HLLTWTWSAC…HQRDRDSIKS (67 aa)) are GP domain. The segment covering 158 to 177 (PIKDEKKHHDNDHQRDRDSI) has biased composition (basic and acidic residues). Low complexity predominate over residues 178-189 (KSSSVSPSASFR). Positions 180-249 (SSVSPSASFR…SPRGSPAHSP (70 aa)) are ccN domain. Residues S183, S187, S191, and S197 each carry the phosphoserine modification. Basic and acidic residues predominate over residues 190–227 (GSEKHRNSTDYSSESKKQKTEEKEIAARYDSDGEKSDD). K212 bears the N6-acetyllysine mark. The residue at position 220 (S220) is a Phosphoserine. Phosphoserine; by CK2 is present on S225. S240 carries the post-translational modification Phosphoserine; by CDK1. Phosphoserine is present on residues S244 and S248. Residues 248-264 (SPRENGLDKTRLLKKDA) are compositionally biased toward basic and acidic residues. An SP domain region spans residues 250-427 (RENGLDKTRL…PGGKPAYSFH (178 aa)). K256 bears the N6-acetyllysine mark. Over residues 265–280 (PISPASVASSSSTPSS) the composition is skewed to low complexity. S267 carries the post-translational modification Phosphoserine. Positions 292-303 (TTPVSKSNTPTP) are enriched in polar residues. The residue at position 293 (T293) is a Phosphothreonine. A phosphoserine mark is found at S296 and S298. Phosphothreonine occurs at positions 300, 302, 309, and 315. Position 394 is a phosphoserine (S394). WD repeat units follow at residues 460-498 (NHGEVVCAVTISNPTRHVYTGGKGCVKVWDITDPGNKSP), 506-545 (NRDNYIRSCRLLPDGRTLIVGGEASTLSIWDLAAPTPRIK), 550-589 (SSAPACYALAISPDSKVCFSCCSDGNIAVWDLHNQTLVRQ), 592-631 (GHTDGASCIDISNDGTKLWTGGLDNTVRSWDLREGRQLQQ), 633-672 (DFTSQIFSLGYCPTGEWLAVGMENSNVEVLHVTKPDKYQL), 674-713 (LHESCVLSLKFAHCGKWFVRPGKDNLLNAWRTPYGASIFQ), and 715-748 (KESSSVLSCDISADDKYIVTGSGDKKATVYEVIY).

Belongs to the WD repeat Groucho/TLE family. Homooligomer and heterooligomer with other family members. Binds PAX5, LEF1, TCF7, TCF7L1 and TCF7L2. Interacts with ZNF703; TLE4 may mediate ZNF703 transcriptional repression. Interacts with SIX3 and SIX6. Interacts with PAX2. Post-translationally, phosphorylated. PAX5 binding increases phosphorylation. Ubiquitinated by XIAP/BIRC4.

Its subcellular location is the nucleus. Transcriptional corepressor that binds to a number of transcription factors. Inhibits the transcriptional activation mediated by PAX5, and by CTNNB1 and TCF family members in Wnt signaling. The effects of full-length TLE family members may be modulated by association with dominant-negative AES. Essential for the transcriptional repressor activity of SIX3 during retina and lens development and for SIX3 transcriptional auto-repression. Involved in transcriptional repression of GNRHR and enhances MSX1-mediated transcriptional repression of CGA/alpha-GSU. The polypeptide is Transducin-like enhancer protein 4 (Tle4) (Rattus norvegicus (Rat)).